The chain runs to 1624 residues: NAD-specific glutamate dehydrogenase (1624 aa).

K845 is a catalytic residue.

The protein belongs to the Glu/Leu/Phe/Val dehydrogenases family. As to quaternary structure, interacts with (unphosphorylated) GarA.

The enzyme catalyses L-glutamate + NAD(+) + H2O = 2-oxoglutarate + NH4(+) + NADH + H(+). Its activity is regulated as follows. Activity is inhibited by unphosphorylated GarA. Its function is as follows. Catalyzes the reversible conversion of L-glutamate to 2-oxoglutarate. The chain is NAD-specific glutamate dehydrogenase (gdh) from Mycobacterium tuberculosis (strain ATCC 25618 / H37Rv).